We begin with the raw amino-acid sequence, 292 residues long: Histamine N-methyltransferase (292 aa).

E28 provides a ligand contact to substrate. S-adenosyl-L-methionine contacts are provided by G60, E89, Q94, S120, and I142. A substrate-binding site is contributed by N283.

The protein belongs to the class I-like SAM-binding methyltransferase superfamily. HNMT family. As to quaternary structure, monomer.

The protein resides in the cytoplasm. It carries out the reaction histamine + S-adenosyl-L-methionine = N(tau)-methylhistamine + S-adenosyl-L-homocysteine + H(+). Functionally, inactivates histamine by N-methylation. Plays an important role in degrading histamine and in regulating the airway response to histamine. In Bos taurus (Bovine), this protein is Histamine N-methyltransferase (HNMT).